The sequence spans 265 residues: GTP cyclohydrolase FolE2 (265 aa).

The protein belongs to the GTP cyclohydrolase IV family.

The catalysed reaction is GTP + H2O = 7,8-dihydroneopterin 3'-triphosphate + formate + H(+). The protein operates within cofactor biosynthesis; 7,8-dihydroneopterin triphosphate biosynthesis; 7,8-dihydroneopterin triphosphate from GTP: step 1/1. Converts GTP to 7,8-dihydroneopterin triphosphate. In Bordetella avium (strain 197N), this protein is GTP cyclohydrolase FolE2.